A 97-amino-acid chain; its full sequence is UPF0473 protein Exig_2070 (97 aa).

The protein belongs to the UPF0473 family.

The protein is UPF0473 protein Exig_2070 of Exiguobacterium sibiricum (strain DSM 17290 / CCUG 55495 / CIP 109462 / JCM 13490 / 255-15).